We begin with the raw amino-acid sequence, 229 residues long: Flagellar L-ring protein (229 aa).

The first 23 residues, 1-23 (MNPLTRVALAVAAFAALVLALSA), serve as a signal peptide directing secretion. Residue C24 is the site of N-palmitoyl cysteine attachment. Residue C24 is the site of S-diacylglycerol cysteine attachment.

It belongs to the FlgH family. The basal body constitutes a major portion of the flagellar organelle and consists of four rings (L,P,S, and M) mounted on a central rod.

Its subcellular location is the cell outer membrane. The protein resides in the bacterial flagellum basal body. Its function is as follows. Assembles around the rod to form the L-ring and probably protects the motor/basal body from shearing forces during rotation. The polypeptide is Flagellar L-ring protein (Anaeromyxobacter dehalogenans (strain 2CP-1 / ATCC BAA-258)).